A 229-amino-acid polypeptide reads, in one-letter code: Ribonuclease 3 (229 aa).

The RNase III domain maps to 5-127 (LDRLERKLGY…LIGAIYLDTG (123 aa)). Glutamate 40 is a binding site for Mg(2+). The active site involves aspartate 44. Aspartate 113 and glutamate 116 together coordinate Mg(2+). Glutamate 116 is a catalytic residue. Residues 154-224 (DPKTRLQEFL…AAAALVALGV (71 aa)) enclose the DRBM domain.

The protein belongs to the ribonuclease III family. In terms of assembly, homodimer. The cofactor is Mg(2+).

The protein resides in the cytoplasm. It catalyses the reaction Endonucleolytic cleavage to 5'-phosphomonoester.. Functionally, digests double-stranded RNA. Involved in the processing of primary rRNA transcript to yield the immediate precursors to the large and small rRNAs (23S and 16S). Processes some mRNAs, and tRNAs when they are encoded in the rRNA operon. Processes pre-crRNA and tracrRNA of type II CRISPR loci if present in the organism. The polypeptide is Ribonuclease 3 (Pseudomonas paraeruginosa (strain DSM 24068 / PA7) (Pseudomonas aeruginosa (strain PA7))).